The sequence spans 184 residues: Large ribosomal subunit protein uL6 (184 aa).

It belongs to the universal ribosomal protein uL6 family. As to quaternary structure, part of the 50S ribosomal subunit.

Its function is as follows. This protein binds to the 23S rRNA, and is important in its secondary structure. It is located near the subunit interface in the base of the L7/L12 stalk, and near the tRNA binding site of the peptidyltransferase center. This is Large ribosomal subunit protein uL6 from Methanosphaera stadtmanae (strain ATCC 43021 / DSM 3091 / JCM 11832 / MCB-3).